The chain runs to 320 residues: Short-chain dehydrogenase/reductase ATR7 (320 aa).

Residues serine 32, isoleucine 34, glutamine 55, aspartate 70, asparagine 93, lysine 134, tyrosine 167, lysine 171, and threonine 202 each contribute to the NADP(+) site. The active-site Proton acceptor is tyrosine 167. Lysine 171 acts as the Lowers pKa of active site Tyr in catalysis.

The protein belongs to the short-chain dehydrogenases/reductases (SDR) family.

It participates in mycotoxin biosynthesis. In terms of biological role, short-chain dehydrogenase/reductase; part of the core atranone cluster (CAC) which products are predicted to catalyze most or all steps of mycotoxin atranone synthesis, starting from geranylgeranyl pyrophosphate (GGPP). The initial cyclization of GGPP to dolabellane is probably performed by the terpene cyclase ATR13. The Baeyer-Villiger oxidation near the end of the atranone synthesis, which converts atranones D and E to atranones F and G is predicted to be catalyzed by the monooxygenase ATR8. Of the CAC's other predicted gene products, the reducing PKS ATR6 might synthesize a polyketide chain. This polyketide is probably transferred onto the atranone backbone by the polyketide transferase ATR5. Other predicted CAC products include 4 oxygenases (ATR2, ATR3, ATR4, and ATR14), 3 short-chain reductases (ATR7, ATR9, and ATR10), and a methyltransferase (ATR12). These may all be involved in the various steps of atranone biosynthesis, although their specific roles must await experimental determination. The protein is Short-chain dehydrogenase/reductase ATR7 of Stachybotrys chlorohalonatus (strain IBT 40285).